The chain runs to 495 residues: Serine/threonine-protein phosphatase 2A regulatory subunit sur-6 (495 aa).

Positions 1-27 are disordered; it reads MVMEVDEPAVAATTSQNQPQEHANDFD. Positions 12-21 are enriched in polar residues; sequence ATTSQNQPQE. 6 WD repeats span residues 64–103, 130–171, 215–253, 264–304, 323–361, and 378–419; these read TEADVISCVEFSHDGEYLATGDKGGRVVIFQRDQSGKYVK, EIDE…RKIG, AHTYHVNSISVNSDQETFLSADDLRVNLWNLEITNESFN, ELTE…LCDA, EIIASVSDVKFSHNGRYLLTRDYLTVKVWDLNMESQPVE, and ENDS…DAKT. The interval 439-459 is disordered; that stretch reads SAKRKRNNLSSSGETTEEDLS. A WD 7 repeat occupies 464 to 495; the sequence is QFDRKILHTAWHPKDNIIALAATNNLYIFSDV.

The protein belongs to the phosphatase 2A regulatory subunit B family. As to quaternary structure, part of a complex consisting of a common heterodimeric core enzyme, composed of catalytic subunit let-92 and constant regulatory subunit paa-1, that associates with a variety of regulatory subunits which confer distinct properties to the holoenzyme. Interacts with let-92.

It localises to the cytoplasm. In terms of biological role, probable regulatory subunit of serine/threonine phosphatase let-92. Together with let-92 and constant regulatory subunit paa-1, positively regulates centriole duplication during early embryonic cell divisions by preventing the degradation of sas-5 and kinase zyg-1. In addition, during vulva development, may play a role with phosphatase let-92 and regulatory subunit paa-1 in the induction of vulva cell precursors by positively regulating let-60/Ras-MAP kinase signaling, probably by promoting lin-45 activation. In intestinal epithelial cells, may play a role in the late secretory pathway probably by regulating the exocyst, a protein complex involved in targeting secretory vesicles to the plasma membrane. This chain is Serine/threonine-protein phosphatase 2A regulatory subunit sur-6, found in Caenorhabditis elegans.